Reading from the N-terminus, the 228-residue chain is Phosphatidylglycerophosphate phosphatase PTPMT2 (228 aa).

Residues 1–10 (MTDETEEDDT) show a composition bias toward acidic residues. Residues 1–30 (MTDETEEDDTTQQRSSRNDGVSKNKGKGFK) form a disordered region. 2 residues coordinate substrate: Y48 and D126. Residues 66 to 213 (WWDQIDEYLL…VEEFSRLQSP (148 aa)) form the Tyrosine-protein phosphatase domain. C157 (phosphocysteine intermediate) is an active-site residue. Positions 157 to 163 (CKAGRGR) match the Glucan phosphatase signature motif CXAGXGR motif. 158–163 (KAGRGR) is a substrate binding site.

Belongs to the protein-tyrosine phosphatase family. Non-receptor class dual specificity subfamily. As to expression, expressed in roots, leaves, stems and flowers. In terms of tissue distribution, expressed at low levels in stems and flowers.

The catalysed reaction is O-phospho-L-seryl-[protein] + H2O = L-seryl-[protein] + phosphate. It catalyses the reaction O-phospho-L-threonyl-[protein] + H2O = L-threonyl-[protein] + phosphate. The enzyme catalyses O-phospho-L-tyrosyl-[protein] + H2O = L-tyrosyl-[protein] + phosphate. It carries out the reaction a 1,2-diacyl-sn-glycero-3-phospho-(1'-sn-glycero-3'-phosphate) + H2O = a 1,2-diacyl-sn-glycero-3-phospho-(1'-sn-glycerol) + phosphate. Its pathway is phospholipid metabolism; phosphatidylglycerol biosynthesis; phosphatidylglycerol from CDP-diacylglycerol: step 2/2. Its function is as follows. Exhibits phosphatidylglycerophosphate phosphatase activity. Involved in root growth and columella cells organization. May possess protein phosphatase activity. The polypeptide is Phosphatidylglycerophosphate phosphatase PTPMT2 (Arabidopsis thaliana (Mouse-ear cress)).